We begin with the raw amino-acid sequence, 526 residues long: Inosine-5'-monophosphate dehydrogenase (526 aa).

2 CBS domains span residues 120–179 (FIQD…EDPV) and 183–239 (MATD…PLAS). Residues 276-278 (DSS) and 326-328 (GMG) each bind NAD(+). Gly-328 and Gly-330 together coordinate K(+). Ser-331 lines the IMP pocket. Cys-333 contacts K(+). Residue Cys-333 is the Thioimidate intermediate of the active site. IMP is bound by residues 366-368 (DGG) and 389-390 (GS). Arg-439 (proton acceptor) is an active-site residue. Residue Gln-451 participates in IMP binding. K(+) is bound at residue Ser-506. Residues 506-526 (SAQTEGNVHGLHTHEKKLYSS) are disordered. The segment covering 517-526 (HTHEKKLYSS) has biased composition (basic and acidic residues).

It belongs to the IMPDH/GMPR family. As to quaternary structure, homotetramer. It depends on K(+) as a cofactor.

It is found in the cytoplasm. It carries out the reaction IMP + NAD(+) + H2O = XMP + NADH + H(+). It functions in the pathway secondary metabolite biosynthesis; terpenoid biosynthesis. Mycophenolic acid (MPA) is a non-competitive inhibitor that prevents formation of the closed enzyme conformation by binding to the same site as the amobile flap. In contrast, mizoribine monophosphate (MZP) is a competitive inhibitor that induces the closed conformation. MPA is a potent inhibitor of mammalian IMPDHs but a poor inhibitor of the bacterial enzymes. MZP is a more potent inhibitor of bacterial IMPDH. Its function is as follows. Catalyzes the conversion of inosine 5'-phosphate (IMP) to xanthosine 5'-phosphate (XMP), the first committed and rate-limiting step in the de novo synthesis of guanine nucleotides, and therefore plays an important role in the regulation of cell growth. Part of the gene cluster that mediates the biosynthesis of mycophenolic acid (MPA), the first isolated antibiotic natural product in the world. Does not play a role in the biosynthesis of MPA, but is involved in self resistance to MPA, since MPA acts as an inhibitor of IMP dehydrogenases. The sequence is that of Inosine-5'-monophosphate dehydrogenase from Penicillium roqueforti (strain FM164).